The chain runs to 421 residues: Aspartokinase (421 aa).

7-10 lines the ATP pocket; the sequence is KYGG. 25 to 30 is a binding site for substrate; the sequence is RIVATK. Position 41 (Ser41) interacts with ATP. Substrate-binding positions include 45-49, Glu74, 125-126, 151-154, and Ser154; these read DTTDE, LD, and RGGS. ATP contacts are provided by residues 174–175, 180–185, and Lys210; these read SD and YTADPR. ACT domains are found at residues 267-343 and 349-421; these read VTVL…YDDQ and LVGA…GTGR. Substrate is bound by residues Asp274, 274-279, 292-294, Gln298, 360-361, 374-375, and 381-382; these read DKPGEA, NID, VT, NV, and SE.

The protein belongs to the aspartokinase family. As to quaternary structure, tetramer consisting of 2 isoforms Alpha (catalytic and regulation) and of a homodimer of 2 isoforms Beta (regulation).

The catalysed reaction is L-aspartate + ATP = 4-phospho-L-aspartate + ADP. The protein operates within amino-acid biosynthesis; L-lysine biosynthesis via DAP pathway; (S)-tetrahydrodipicolinate from L-aspartate: step 1/4. Its pathway is amino-acid biosynthesis; L-methionine biosynthesis via de novo pathway; L-homoserine from L-aspartate: step 1/3. It functions in the pathway amino-acid biosynthesis; L-threonine biosynthesis; L-threonine from L-aspartate: step 1/5. Functionally, catalyzes the phosphorylation of the beta-carboxyl group of aspartic acid with ATP to yield 4-phospho-L-aspartate, which is involved in the branched biosynthetic pathway leading to the biosynthesis of amino acids lysine, threonine, isoleucine and methionine. This chain is Aspartokinase (lysC), found in Corynebacterium efficiens (strain DSM 44549 / YS-314 / AJ 12310 / JCM 11189 / NBRC 100395).